The following is a 307-amino-acid chain: Aspartate carbamoyltransferase catalytic subunit (307 aa).

Carbamoyl phosphate-binding residues include arginine 49 and threonine 50. L-aspartate is bound at residue lysine 77. 3 residues coordinate carbamoyl phosphate: arginine 99, histidine 127, and glutamine 130. Arginine 160 and arginine 211 together coordinate L-aspartate. Carbamoyl phosphate contacts are provided by alanine 250 and proline 251.

It belongs to the aspartate/ornithine carbamoyltransferase superfamily. ATCase family. In terms of assembly, heterododecamer (2C3:3R2) of six catalytic PyrB chains organized as two trimers (C3), and six regulatory PyrI chains organized as three dimers (R2).

It catalyses the reaction carbamoyl phosphate + L-aspartate = N-carbamoyl-L-aspartate + phosphate + H(+). Its pathway is pyrimidine metabolism; UMP biosynthesis via de novo pathway; (S)-dihydroorotate from bicarbonate: step 2/3. In terms of biological role, catalyzes the condensation of carbamoyl phosphate and aspartate to form carbamoyl aspartate and inorganic phosphate, the committed step in the de novo pyrimidine nucleotide biosynthesis pathway. The chain is Aspartate carbamoyltransferase catalytic subunit from Bacillus pumilus (strain SAFR-032).